The sequence spans 200 residues: Pyrrolidone-carboxylate peptidase (200 aa).

Active-site residues include glutamate 78, cysteine 141, and histidine 165.

Belongs to the peptidase C15 family. Homotetramer.

The protein localises to the cytoplasm. The enzyme catalyses Release of an N-terminal pyroglutamyl group from a polypeptide, the second amino acid generally not being Pro.. Functionally, removes 5-oxoproline from various penultimate amino acid residues except L-proline. This chain is Pyrrolidone-carboxylate peptidase, found in Lactobacillus acidophilus (strain ATCC 700396 / NCK56 / N2 / NCFM).